Consider the following 1851-residue polypeptide: Protein lap4 (1851 aa).

LRR repeat units lie at residues 38 to 59 (TLEELFLDANHIRDLPKNFFRL), 61 to 82 (RLRKLGLSDNEIGRLPPDIQNF), 84 to 105 (NLVELDVSRNDIPDIPDDIKHL), 107 to 128 (SLQVADFSSNPIPKLPSGFSQL), 130 to 152 (NLTVLGLNDMSLTTLPADFGSLT), 153 to 174 (QLESLELRENLLKHLPETISQL), 176 to 197 (KLKRLDLGDNEIEDLPPYLGYL), 199 to 220 (GLHELWLDHNQLQRLPPELGLL), 222 to 243 (KLTYLDVSENRLEELPNEISGL), 245 to 267 (SLTDLDLAQNLLEALPDGIAKLS), 268 to 289 (RLTILKLDQNRLQRLNDTLGNC), 291 to 312 (NMQELILTENFLSELPASIGQM), 314 to 335 (KLNNLNVDRNALEYLPLEIGQC), 337 to 358 (NLGVLSLRDNKLKKLPPELGNC), 360 to 382 (VLHVLDVSGNQLLYLPYSLVNLQ), and 383 to 403 (LKAVWLSENQSQPLLTFQPDT). Disordered regions lie at residues 427-474 (PARD…KDLK), 584-641 (VGGS…VQHL), and 656-719 (SQER…PDNL). Residues serine 433 and serine 435 each carry the phosphoserine modification. Over residues 438–461 (FEEREPSRTVVKFSEEATQEKETP) the composition is skewed to basic and acidic residues. The stretch at 471–492 (KDLKAKAQKLKVERSRNEEHAN) forms a coiled coil. Positions 589-601 (EVQDDDEQEDEFE) are enriched in acidic residues. Residues 620 to 639 (RPPKLHRRDTPHHLKNKRVQ) show a composition bias toward basic residues. The segment covering 656–672 (SQERNDTTPQHSLSGKV) has biased composition (polar residues). A compositionally biased stretch (acidic residues) spans 676–686 (IEEEEQLEVEQ). A coiled-coil region spans residues 677 to 693 (EEEEQLEVEQEQQQQQQ). A phosphoserine mark is found at serine 700, serine 702, and serine 705. Residues 731–818 (EIHIERTAAG…VLVLVVQREV (88 aa)) enclose the PDZ 1 domain. Residues serine 834 and serine 837 each carry the phosphoserine modification. Residues 929–1019 (HTTLIRDQIG…FVRLVLQREY (91 aa)) form the PDZ 2 domain. 2 positions are modified to phosphoserine: serine 1031 and serine 1041. A disordered region spans residues 1067 to 1150 (LATTTPTPKP…EAQPSSLRPL (84 aa)). 2 stretches are compositionally biased toward polar residues: residues 1080–1097 (ASISNNNNTLPSSKTNGF) and 1132–1149 (GSTTSGDSGEAQPSSLRP). PDZ domains follow at residues 1239 to 1329 (EVVL…QHDP) and 1336 to 1428 (EVLL…CKGY). Positions 1448–1467 (NSSASCSGGSRQGSRASETG) are enriched in polar residues. Positions 1448–1485 (NSSASCSGGSRQGSRASETGSELSQSQSVSSLDHEEDE) are disordered. Low complexity predominate over residues 1468–1478 (SELSQSQSVSS). 3 positions are modified to phosphoserine: serine 1475, serine 1477, and serine 1478. Threonine 1599 carries the post-translational modification Phosphothreonine. A compositionally biased stretch (low complexity) spans 1647 to 1669 (AESANSAGAPSPAVPASTPGSAP). 2 disordered regions span residues 1647 to 1751 (AESA…KVFS) and 1772 to 1851 (LRRD…VFRS). Residues 1725–1751 (VSDKKRFFESAMEDQHKPTQKTDKVFS) show a composition bias toward basic and acidic residues. Residues 1753-1790 (LSKDEVEKLRQEEERKIATLRRDKNSRLLDAANDNIDK) adopt a coiled-coil conformation. Acidic residues predominate over residues 1807-1816 (DDNDDSDQEE). Over residues 1831 to 1851 (HFDDAEDMRNPLDEIEAVFRS) the composition is skewed to basic and acidic residues.

It belongs to the LAP (LRR and PDZ) protein family. In terms of tissue distribution, during germ band extension, expression of isoform A occurs predominantly in neuroblasts derived from the neuro-ectoderm and later is restricted to CNS neurons and pole cells. Isoform C is strongly expressed in PNS and a subset of CNS neurons. In the adult, expressed in third antennal segment and maxillary palps, major olfactory organs and in Johnstons organ in the second antennal segment. Expression is also observed in cortical regions of the brain. Isoforms expressed in epithelia are coexpressed with dlg1 throughout development.

It is found in the cytoplasm. The protein resides in the apicolateral cell membrane. It localises to the cell junction. Its subcellular location is the septate junction. Its function is as follows. Required for polarization of the embryonic, imaginal disk and follicular epithelia. Specifically restricts apical membrane determinants to the apical cell surface; acts to exclude crb from the basolateral domain and define adherens junction position. Regulates cellular growth and differentiation; acts as a tumor suppressor. Essential for odor guided behavior. The sequence is that of Protein lap4 from Drosophila melanogaster (Fruit fly).